Consider the following 222-residue polypeptide: Superoxide dismutase [Mn], mitochondrial (222 aa).

The transit peptide at 1 to 24 directs the protein to the mitochondrion; sequence MLSRAVCGTSRQLAPVLGYLGSRQ. Mn(2+) is bound at residue His50. Tyr58 is subject to 3'-nitrotyrosine. Lys68 and Lys75 each carry N6-acetyllysine; alternate. 2 positions are modified to N6-succinyllysine; alternate: Lys68 and Lys75. A Mn(2+)-binding site is contributed by His98. Lys114 carries the post-translational modification N6-acetyllysine. N6-acetyllysine; alternate occurs at positions 122 and 130. Lys122 and Lys130 each carry N6-succinyllysine; alternate. Residues Asp183 and His187 each coordinate Mn(2+). The residue at position 202 (Lys202) is an N6-acetyllysine.

The protein belongs to the iron/manganese superoxide dismutase family. In terms of assembly, homotetramer. The cofactor is Mn(2+). Nitrated under oxidative stress. Nitration coupled with oxidation inhibits the catalytic activity. In terms of processing, acetylation at Lys-122 decreases enzymatic activity. Deacetylated by SIRT3 upon exposure to ionizing radiations or after long fasting. Post-translationally, polyubiquitinated; leading to proteasomal degradation. Deubiquitinated by USP36 which increases protein stability.

It localises to the mitochondrion matrix. It catalyses the reaction 2 superoxide + 2 H(+) = H2O2 + O2. Its function is as follows. Destroys superoxide anion radicals which are normally produced within the cells and which are toxic to biological systems. The chain is Superoxide dismutase [Mn], mitochondrial (SOD2) from Homo sapiens (Human).